The chain runs to 506 residues: Histone acetyltransferase esa-1 (506 aa).

A disordered region spans residues 1-24 (MSPPGGDATVGSDEKRQKGKATPD). The region spanning 26 to 78 (IKMGCIAMVMKEGQLRRAEILSIKDTKSGRQFYCNFDNFNKRLDEWVPAARID) is the Tudor-knot domain. The segment at 82–215 (DVEWPNPDKD…LRTSGSMTQN (134 aa)) is disordered. Over residues 87–98 (NPDKDKQKDAKT) the composition is skewed to basic and acidic residues. Residues 109 to 120 (QPSKKNNQKKAS) are compositionally biased toward basic residues. Residues 167–178 (GGDKGVKRKADE) are compositionally biased toward basic and acidic residues. Positions 220 to 494 (SRIRNISKVE…IDPERIQWKP (275 aa)) constitute an MYST-type HAT domain. A C2HC MYST-type zinc finger spans residues 253–278 (IYICEFCLSYYGELKSFVRHRQKCTL). An ESA1-RPD3 motif motif is present at residues 303 to 324 (RTWCRNLCLLSKMFLDHKTLYY). An N6-acetyllysine; by autocatalysis modification is found at K320. Acetyl-CoA-binding positions include 361–365 (ACILT) and 370–376 (QRKGYGR). Residue E396 is the Proton donor/acceptor of the active site. Position 400 (S400) interacts with acetyl-CoA.

Belongs to the MYST (SAS/MOZ) family. Component of the NuA4 histone acetyltransferase complex. Post-translationally, autoacetylation at Lys-320 is required for proper function.

The protein localises to the nucleus. The protein resides in the chromosome. It carries out the reaction L-lysyl-[histone] + acetyl-CoA = N(6)-acetyl-L-lysyl-[histone] + CoA + H(+). The enzyme catalyses L-lysyl-[protein] + acetyl-CoA = N(6)-acetyl-L-lysyl-[protein] + CoA + H(+). It catalyses the reaction 2-hydroxyisobutanoyl-CoA + L-lysyl-[protein] = N(6)-(2-hydroxyisobutanoyl)-L-lysyl-[protein] + CoA + H(+). The catalysed reaction is (2E)-butenoyl-CoA + L-lysyl-[protein] = N(6)-(2E)-butenoyl-L-lysyl-[protein] + CoA + H(+). Functionally, catalytic component of the NuA4 histone acetyltransferase (HAT) complex which is involved in epigenetic transcriptional activation of selected genes principally by acetylation of nucleosomal histones H4, H3, H2B, H2A and H2A variant H2A.Z. Acetylates histone H4 to form H4K5ac, H4K8ac, H4K12ac and H4K16ac, histone H3 to form H3K14ac, and histone H2A to form H2AK4ac and H2AK7ac. The NuA4 complex is involved in the DNA damage response and is required for chromosome segregation. The NuA4 complex plays a direct role in repair of DNA double-strand breaks (DSBs) through homologous recombination. Recruitment to promoters depends on H3K4me. Also acetylates non-histone proteins. In addition to protein acetyltransferase, can use different acyl-CoA substrates, such as 2-hydroxyisobutanoyl-CoA (2-hydroxyisobutyryl-CoA) or (2E)-butenoyl-CoA (crotonyl-CoA), and is able to mediate protein 2-hydroxyisobutyrylation and crotonylation, respectively. The protein is Histone acetyltransferase esa-1 (esa-1) of Neurospora crassa (strain ATCC 24698 / 74-OR23-1A / CBS 708.71 / DSM 1257 / FGSC 987).